Reading from the N-terminus, the 135-residue chain is PTS system sorbose-specific EIIA component (135 aa).

The 131-residue stretch at 1–131 folds into the PTS EIIA type-4 domain; sequence MVHAIFCAHG…CVVWQQPETV (131 aa). The Tele-phosphohistidine intermediate role is filled by His-9. Residue His-9 is modified to Phosphohistidine; by HPr.

Its subcellular location is the cytoplasm. In terms of biological role, the phosphoenolpyruvate-dependent sugar phosphotransferase system (PTS), a major carbohydrate active transport system, catalyzes the phosphorylation of incoming sugar substrates concomitant with their translocation across the cell membrane. The enzyme II SorABFM PTS system is involved in L-sorbose transport. The chain is PTS system sorbose-specific EIIA component from Klebsiella pneumoniae.